Consider the following 1766-residue polypeptide: Putative ATP-dependent RNA helicase R366 (1766 aa).

The segment at 209-239 is disordered; that stretch reads KSSSNQNSNQSNQESNESNQEPNESNQEINQ. Positions 210–239 are enriched in low complexity; the sequence is SSSNQNSNQSNQESNESNQEPNESNQEINQ. A Helicase ATP-binding domain is found at 656–865; sequence YHHYSNNRVL…RYYRRINDNR (210 aa). 669–676 is an ATP binding site; the sequence is GATGVGKS. The DEAH box motif lies at 812–815; it reads DEAH. The Helicase C-terminal domain occupies 947 to 1116; it reads DIHKSIKAIN…TMVKLIKSYP (170 aa).

The protein belongs to the DEAD box helicase family. DEAH subfamily.

The catalysed reaction is ATP + H2O = ADP + phosphate + H(+). The protein is Putative ATP-dependent RNA helicase R366 of Acanthamoeba polyphaga mimivirus (APMV).